The sequence spans 380 residues: Alcohol dehydrogenase 2 (380 aa).

8 residues coordinate Zn(2+): Cys-48, Thr-50, His-70, Cys-100, Cys-103, Cys-106, Cys-114, and Cys-178. Positions 50 and 70 each coordinate an alcohol. Position 50 (Thr-50) interacts with NAD(+). NAD(+) contacts are provided by residues 203-208 (GLGAVG), Asp-227, Arg-232, Thr-273, Val-296, 296-298 (VGV), Phe-323, and Arg-373.

The protein belongs to the zinc-containing alcohol dehydrogenase family. As to quaternary structure, homodimer. Homotetramer. It depends on Zn(2+) as a cofactor.

The protein resides in the cytoplasm. The enzyme catalyses a primary alcohol + NAD(+) = an aldehyde + NADH + H(+). It catalyses the reaction a secondary alcohol + NAD(+) = a ketone + NADH + H(+). The protein is Alcohol dehydrogenase 2 (ADH2) of Solanum lycopersicum (Tomato).